A 212-amino-acid polypeptide reads, in one-letter code: Large ribosomal subunit protein uL3 (212 aa).

The span at 139-153 (LSHRVTGSIGQNQTP) shows a compositional bias: polar residues. Positions 139–161 (LSHRVTGSIGQNQTPGKVFKGKK) are disordered. Position 151 is an N5-methylglutamine (glutamine 151).

This sequence belongs to the universal ribosomal protein uL3 family. As to quaternary structure, part of the 50S ribosomal subunit. Forms a cluster with proteins L14 and L19. Post-translationally, methylated by PrmB.

Its function is as follows. One of the primary rRNA binding proteins, it binds directly near the 3'-end of the 23S rRNA, where it nucleates assembly of the 50S subunit. In Baumannia cicadellinicola subsp. Homalodisca coagulata, this protein is Large ribosomal subunit protein uL3.